The chain runs to 699 residues: Endogenous retrovirus group K member 19 Env polyprotein (699 aa).

The tract at residues 1–47 (MNPSEMQRKAPPRRRRHRNRAPLTHKMNKMVTSEEQMKLPSTKKAEP) is disordered. The signal sequence occupies residues 1-89 (MNPSEMQRKA…ALMIVSMVVS (89 aa)). Residues 10–20 (APPRRRRHRNR) are compositionally biased toward basic residues. The Extracellular segment spans residues 90 to 632 (LPMPAGAAAA…NLNPVTWVKT (543 aa)). 7 N-linked (GlcNAc...) asparagine glycosylation sites follow: Asn100, Asn128, Asn153, Asn274, Asn355, Asn372, and Asn461. Residues 466–486 (FIFTLIAVIMGLIAVTATAAV) are fusion peptide. 4 N-linked (GlcNAc...) asparagine glycosylation sites follow: Asn507, Asn554, Asn566, and Asn585. The helical transmembrane segment at 633–653 (IGSTTIINLILILVCLFCLLL) threads the bilayer. Residues 654–699 (VCRCTQQLRRDSDHRERAMMTMAVLSKRKGGNVGKSKRDQIVTVSV) lie on the Cytoplasmic side of the membrane.

Belongs to the beta type-B retroviral envelope protein family. HERV class-II K(HML-2) env subfamily. The surface (SU) and transmembrane (TM) proteins form a heterodimer. SU and TM are attached by noncovalent interactions or by a labile interchain disulfide bond. In terms of processing, specific enzymatic cleavages in vivo yield the mature SU and TM proteins.

The protein localises to the cell membrane. Its subcellular location is the virion. Functionally, retroviral envelope proteins mediate receptor recognition and membrane fusion during early infection. Endogenous envelope proteins may have kept, lost or modified their original function during evolution. This endogenous envelope protein has lost its original fusogenic properties. In terms of biological role, SU mediates receptor recognition. Its function is as follows. TM anchors the envelope heterodimer to the viral membrane through one transmembrane domain. The other hydrophobic domain, called fusion peptide, mediates fusion of the viral membrane with the target cell membrane. The sequence is that of Endogenous retrovirus group K member 19 Env polyprotein (ERVK-19) from Homo sapiens (Human).